The chain runs to 179 residues: Crossover junction endodeoxyribonuclease RuvC (179 aa).

Active-site residues include Asp7, Glu67, and Asp139. Mg(2+) contacts are provided by Asp7, Glu67, and Asp139.

Belongs to the RuvC family. Homodimer which binds Holliday junction (HJ) DNA. The HJ becomes 2-fold symmetrical on binding to RuvC with unstacked arms; it has a different conformation from HJ DNA in complex with RuvA. In the full resolvosome a probable DNA-RuvA(4)-RuvB(12)-RuvC(2) complex forms which resolves the HJ. Mg(2+) serves as cofactor.

It is found in the cytoplasm. The catalysed reaction is Endonucleolytic cleavage at a junction such as a reciprocal single-stranded crossover between two homologous DNA duplexes (Holliday junction).. In terms of biological role, the RuvA-RuvB-RuvC complex processes Holliday junction (HJ) DNA during genetic recombination and DNA repair. Endonuclease that resolves HJ intermediates. Cleaves cruciform DNA by making single-stranded nicks across the HJ at symmetrical positions within the homologous arms, yielding a 5'-phosphate and a 3'-hydroxyl group; requires a central core of homology in the junction. The consensus cleavage sequence is 5'-(A/T)TT(C/G)-3'. Cleavage occurs on the 3'-side of the TT dinucleotide at the point of strand exchange. HJ branch migration catalyzed by RuvA-RuvB allows RuvC to scan DNA until it finds its consensus sequence, where it cleaves and resolves the cruciform DNA. The chain is Crossover junction endodeoxyribonuclease RuvC from Sorangium cellulosum (strain So ce56) (Polyangium cellulosum (strain So ce56)).